A 330-amino-acid polypeptide reads, in one-letter code: ADP-L-glycero-D-manno-heptose-6-epimerase (330 aa).

Residues 10 to 11, 31 to 32, Lys38, Lys53, 74 to 78, and Asn91 each bind NADP(+); these read FI, DD, and QGACS. The active-site Proton acceptor is Tyr138. Lys142 contributes to the NADP(+) binding site. Substrate is bound at residue Asn167. NADP(+) is bound by residues Val168 and Lys176. Lys176 acts as the Proton acceptor in catalysis. Substrate-binding positions include Arg178, His185, 199–202, Arg212, and Tyr291; that span reads FAGW.

This sequence belongs to the NAD(P)-dependent epimerase/dehydratase family. HldD subfamily. As to quaternary structure, homopentamer. NADP(+) serves as cofactor.

It carries out the reaction ADP-D-glycero-beta-D-manno-heptose = ADP-L-glycero-beta-D-manno-heptose. It participates in nucleotide-sugar biosynthesis; ADP-L-glycero-beta-D-manno-heptose biosynthesis; ADP-L-glycero-beta-D-manno-heptose from D-glycero-beta-D-manno-heptose 7-phosphate: step 4/4. Its function is as follows. Catalyzes the interconversion between ADP-D-glycero-beta-D-manno-heptose and ADP-L-glycero-beta-D-manno-heptose via an epimerization at carbon 6 of the heptose. The polypeptide is ADP-L-glycero-D-manno-heptose-6-epimerase (Bordetella petrii (strain ATCC BAA-461 / DSM 12804 / CCUG 43448)).